We begin with the raw amino-acid sequence, 103 residues long: Large ribosomal subunit protein bL21 (103 aa).

This sequence belongs to the bacterial ribosomal protein bL21 family. In terms of assembly, part of the 50S ribosomal subunit. Contacts protein L20.

Its function is as follows. This protein binds to 23S rRNA in the presence of protein L20. The sequence is that of Large ribosomal subunit protein bL21 from Klebsiella pneumoniae (strain 342).